A 215-amino-acid polypeptide reads, in one-letter code: 3-demethoxyubiquinol 3-hydroxylase (215 aa).

The Fe cation site is built by E64, E94, H97, E146, E178, and H181.

This sequence belongs to the COQ7 family. The cofactor is Fe cation.

It localises to the cell membrane. It catalyses the reaction a 5-methoxy-2-methyl-3-(all-trans-polyprenyl)benzene-1,4-diol + AH2 + O2 = a 3-demethylubiquinol + A + H2O. It functions in the pathway cofactor biosynthesis; ubiquinone biosynthesis. Functionally, catalyzes the hydroxylation of 2-nonaprenyl-3-methyl-6-methoxy-1,4-benzoquinol during ubiquinone biosynthesis. The sequence is that of 3-demethoxyubiquinol 3-hydroxylase from Coxiella burnetii (strain RSA 331 / Henzerling II).